A 502-amino-acid chain; its full sequence is Glutamate--tRNA ligase (502 aa).

A 'HIGH' region motif is present at residues 21–31 (PSPTGVPHVGM). The short motif at 265 to 269 (KLSKR) is the 'KMSKS' region element. Lys268 is a binding site for ATP.

This sequence belongs to the class-I aminoacyl-tRNA synthetase family. Glutamate--tRNA ligase type 1 subfamily. As to quaternary structure, monomer.

It is found in the cytoplasm. It carries out the reaction tRNA(Glu) + L-glutamate + ATP = L-glutamyl-tRNA(Glu) + AMP + diphosphate. Functionally, catalyzes the attachment of glutamate to tRNA(Glu) in a two-step reaction: glutamate is first activated by ATP to form Glu-AMP and then transferred to the acceptor end of tRNA(Glu). In Mycobacterium leprae (strain TN), this protein is Glutamate--tRNA ligase.